The chain runs to 406 residues: Secretion apparatus protein BsaZ (406 aa).

A run of 4 helical transmembrane segments spans residues 28–48 (IVALIVIATGALAAPALVDLT), 80–100 (IAAPFVLLCAAAGALPSLVQS), 137–157 (ALLYVGVFALTVRVFAGLYHA), and 175–195 (IVLTVRLVLLFLLCALPVLIL). Residues 341-406 (AANRGGPPPE…APARTGDQNA (66 aa)) are disordered. Positions 370–399 (DACADNAFPDDAPPGAAAPNAGSPDGGAPA) are enriched in low complexity.

The protein belongs to the type III secretion exporter family.

It localises to the cell membrane. Part of the bsa type III secretion system, is involved in the intracellular replication of invading bacteria inside the host cell. Probably necessary for the lysis of the vacuole membrane and escape into the host cell cytoplasm. The sequence is that of Secretion apparatus protein BsaZ (bsaZ) from Burkholderia pseudomallei (strain 668).